The primary structure comprises 553 residues: Glucose-6-phosphate isomerase (553 aa).

The active-site Proton donor is the glutamate 355. Catalysis depends on residues histidine 386 and lysine 513.

It belongs to the GPI family.

It localises to the cytoplasm. The enzyme catalyses alpha-D-glucose 6-phosphate = beta-D-fructose 6-phosphate. It participates in carbohydrate biosynthesis; gluconeogenesis. Its pathway is carbohydrate degradation; glycolysis; D-glyceraldehyde 3-phosphate and glycerone phosphate from D-glucose: step 2/4. Functionally, catalyzes the reversible isomerization of glucose-6-phosphate to fructose-6-phosphate. The sequence is that of Glucose-6-phosphate isomerase from Baumannia cicadellinicola subsp. Homalodisca coagulata.